Consider the following 352-residue polypeptide: Thymidine kinase (352 aa).

32–39 (GVYGIGKS) provides a ligand contact to ATP. Glu-60 serves as the catalytic Proton acceptor. Substrate-binding residues include Tyr-78, Gln-102, Phe-105, and Phe-148. Arg-192 lines the ATP pocket. Arg-198 contacts substrate.

Belongs to the herpesviridae thymidine kinase family. In terms of assembly, homodimer.

It catalyses the reaction thymidine + ATP = dTMP + ADP + H(+). Catalyzes the transfer of the gamma-phospho group of ATP to thymidine to generate dTMP in the salvage pathway of pyrimidine synthesis. The dTMP serves as a substrate for DNA polymerase during viral DNA replication. Allows the virus to be reactivated and to grow in non-proliferative cells lacking a high concentration of phosphorylated nucleic acid precursors. The chain is Thymidine kinase from Equine herpesvirus 4 (strain 1942) (EHV-4).